The primary structure comprises 108 residues: Sperm-egg fusion protein LLCFC1 (108 aa).

An N-terminal signal peptide occupies residues 1–30 (MTSLGSQLHRATFLTALLLLLLLQVKGVKT). Basic and acidic residues predominate over residues 39–49 (GDKSQKDKVSS). Positions 39 to 64 (GDKSQKDKVSSEDQGEEEYEEHFEAS) are disordered.

In terms of tissue distribution, detected in testicular germ cells and spermatozoa (at protein level). Abundantly expressed in testis.

It is found in the secreted. Functionally, sperm protein required for fusion of sperm with the egg membrane during fertilization. This is Sperm-egg fusion protein LLCFC1 from Mus musculus (Mouse).